The following is a 122-amino-acid chain: Large ribosomal subunit protein uL14 (122 aa).

It belongs to the universal ribosomal protein uL14 family. In terms of assembly, part of the 50S ribosomal subunit. Forms a cluster with proteins L3 and L19. In the 70S ribosome, L14 and L19 interact and together make contacts with the 16S rRNA in bridges B5 and B8.

Its function is as follows. Binds to 23S rRNA. Forms part of two intersubunit bridges in the 70S ribosome. This is Large ribosomal subunit protein uL14 from Bacillus velezensis (strain DSM 23117 / BGSC 10A6 / LMG 26770 / FZB42) (Bacillus amyloliquefaciens subsp. plantarum).